The chain runs to 359 residues: MSYRRELEKYRDLDEDEILGALTEEELRTLENELDELDPDNALLPAGLRQKDQTTKAPTGPFKREELLDHLEKQAKEFKDREDLVPYTGEKRGKIWVPKQKPMDPVLESVTLEPELEEALANASDAELCDIAAILGMHTLMSNQQYYQALGSSSIVNKEGLNSVIKPTQYKPVPDEEPNPTDVEETLERIKNNDPELEEVNLNNIRNIPIPTLKAYAESLKENSYVKKFSIVGTRSNDPVAFALAEMLKVNKVLKTLNVESNFISGAGILCLVEALPHNTSLVELKIDNQSQPLGNKVEMEIVNMLEKNTTLLKFGYHFTQQGPRLRASNAMMNNNDLVRKRRLADLTGPIIPKCRSGV.

Residues 36–61 (ELDPDNALLPAGLRQKDQTTKAPTGP) form a disordered region. A tropomyosin-binding region spans residues 39-138 (PDNALLPAGL…CDIAAILGMH (100 aa)).

The protein belongs to the tropomodulin family. In terms of assembly, binds to the N-terminus of tropomyosin and to actin. Interacts with FLII.

The protein resides in the cytoplasm. It localises to the cytoskeleton. Functionally, blocks the elongation and depolymerization of the actin filaments at the pointed end. The Tmod/TM complex contributes to the formation of the short actin protofilament, which in turn defines the geometry of the membrane skeleton. The sequence is that of Tropomodulin-1 (Tmod1) from Rattus norvegicus (Rat).